A 434-amino-acid chain; its full sequence is UPF0597 protein CLD_2616 (434 aa).

This sequence belongs to the UPF0597 family.

This is UPF0597 protein CLD_2616 from Clostridium botulinum (strain Okra / Type B1).